The following is an 801-amino-acid chain: Ferredoxin:CoB-CoM heterodisulfide reductase subunit A (801 aa).

149–172 (GGGIAGITAALNLADNGVSTVLVE) lines the FAD pocket. 2 4Fe-4S ferredoxin-type domains span residues 239-269 (KKPR…FNCG) and 285-320 (PKIY…FSQK). The [4Fe-4S] cluster site is built by Cys248, Cys251, Cys254, Cys258, Cys295, Cys303, Cys306, and Cys310. A disordered region spans residues 382–409 (FSKASSDPTPATCDSRCEDSSDESQGTD). 4Fe-4S ferredoxin-type domains follow at residues 606-634 (EIAT…VNES) and 635-664 (GRVV…IAGF). Positions 615, 618, 621, 624, 644, 647, 650, and 654 each coordinate [4Fe-4S] cluster.

It belongs to the HdrA family. In terms of assembly, the ferredoxin:CoB-CoM heterodisulfide reductase is composed of three subunits; HdrA1, HdrB1 and HdrC1. Requires [4Fe-4S] cluster as cofactor. It depends on FAD as a cofactor.

Its subcellular location is the cytoplasm. It carries out the reaction coenzyme B + coenzyme M + 2 oxidized [2Fe-2S]-[ferredoxin] = coenzyme M-coenzyme B heterodisulfide + 2 reduced [2Fe-2S]-[ferredoxin] + 2 H(+). It participates in cofactor metabolism; coenzyme M-coenzyme B heterodisulfide reduction; coenzyme B and coenzyme M from coenzyme M-coenzyme B heterodisulfide: step 1/1. Its function is as follows. Part of a complex that catalyzes the reversible reduction of CoM-S-S-CoB to the thiol-coenzymes H-S-CoM (coenzyme M) and H-S-CoB (coenzyme B). Probably involved in methylotrophic methanogenesis but not in aceticlastic methanogenesis. The chain is Ferredoxin:CoB-CoM heterodisulfide reductase subunit A from Methanosarcina acetivorans (strain ATCC 35395 / DSM 2834 / JCM 12185 / C2A).